A 165-amino-acid chain; its full sequence is Xanthine-guanine phosphoribosyltransferase (165 aa).

5-phospho-alpha-D-ribose 1-diphosphate-binding positions include 41 to 42 (RG) and 98 to 106 (DDLTDTGKT). Asp99 serves as a coordination point for Mg(2+). The guanine site is built by Asp102 and Ile145. 2 residues coordinate xanthine: Asp102 and Ile145. GMP-binding positions include 102–106 (DTGKT) and 144–145 (WI).

The protein belongs to the purine/pyrimidine phosphoribosyltransferase family. XGPT subfamily. Homotetramer. It depends on Mg(2+) as a cofactor.

Its subcellular location is the cell inner membrane. The enzyme catalyses GMP + diphosphate = guanine + 5-phospho-alpha-D-ribose 1-diphosphate. It carries out the reaction XMP + diphosphate = xanthine + 5-phospho-alpha-D-ribose 1-diphosphate. The catalysed reaction is IMP + diphosphate = hypoxanthine + 5-phospho-alpha-D-ribose 1-diphosphate. It participates in purine metabolism; GMP biosynthesis via salvage pathway; GMP from guanine: step 1/1. Its pathway is purine metabolism; XMP biosynthesis via salvage pathway; XMP from xanthine: step 1/1. Functionally, purine salvage pathway enzyme that catalyzes the transfer of the ribosyl-5-phosphate group from 5-phospho-alpha-D-ribose 1-diphosphate (PRPP) to the N9 position of the 6-oxopurines guanine and xanthine to form the corresponding ribonucleotides GMP (guanosine 5'-monophosphate) and XMP (xanthosine 5'-monophosphate), with the release of PPi. To a lesser extent, also acts on hypoxanthine. The chain is Xanthine-guanine phosphoribosyltransferase from Brucella canis (strain ATCC 23365 / NCTC 10854 / RM-666).